The sequence spans 379 residues: Arginine biosynthesis bifunctional protein ArgJ (379 aa).

The substrate site is built by threonine 140, lysine 160, threonine 171, glutamate 249, asparagine 374, and threonine 379. Threonine 171 acts as the Nucleophile in catalysis.

Belongs to the ArgJ family. In terms of assembly, heterotetramer of two alpha and two beta chains.

It localises to the cytoplasm. It catalyses the reaction N(2)-acetyl-L-ornithine + L-glutamate = N-acetyl-L-glutamate + L-ornithine. The enzyme catalyses L-glutamate + acetyl-CoA = N-acetyl-L-glutamate + CoA + H(+). It functions in the pathway amino-acid biosynthesis; L-arginine biosynthesis; L-ornithine and N-acetyl-L-glutamate from L-glutamate and N(2)-acetyl-L-ornithine (cyclic): step 1/1. It participates in amino-acid biosynthesis; L-arginine biosynthesis; N(2)-acetyl-L-ornithine from L-glutamate: step 1/4. Functionally, catalyzes two activities which are involved in the cyclic version of arginine biosynthesis: the synthesis of N-acetylglutamate from glutamate and acetyl-CoA as the acetyl donor, and of ornithine by transacetylation between N(2)-acetylornithine and glutamate. This Archaeoglobus fulgidus (strain ATCC 49558 / DSM 4304 / JCM 9628 / NBRC 100126 / VC-16) protein is Arginine biosynthesis bifunctional protein ArgJ.